The sequence spans 525 residues: MTQQAANALPPVARTYQVRTYGCQMNVHDSERLAGLLEDAGYRRAADGADADVVVFNTCAVRENADNKLYGNLSHLAPRKRSEPQMQIAVGGCLAQKDRDAVLRRAPWVDVVFGTHNIGSLPTLLERARHNRAAQVEIAEALQEFPSTLPAARESAYAGWVSISVGCNNTCTFCIVPSLRGKEVDRRPGDVLAEIQTLVDQGVLEVTLLGQNVNAYGVSFAADERLREDPRMWQSVPRNRGAFAELLRACGRIDGLERVRFTSPHPAEFTDDVIEAMAETPNVCPALHMPLQSGSDRILRAMRRSYRAEKYLGIIDRVRAAIPDAAITTDLIVGFPGETEEDFQATLDVVAASRFSSAFTFQYSKRPGTPAADMPGQLPKAVVSERYQRLIELQERISLEENQAQVGRTLELLVATGEGRKDAATARLSGRARDGRLVHFAPGAAADEPLARRAFDQVRPGDVVTTTVTGAAPHHLIADGALLTHRRTRAGDAHAAGLRPRTGVGLGIPGVGAPAPAPVTTGCAL.

Positions 14-130 (RTYQVRTYGC…LPTLLERARH (117 aa)) constitute an MTTase N-terminal domain. [4Fe-4S] cluster contacts are provided by cysteine 23, cysteine 59, cysteine 93, cysteine 167, cysteine 171, and cysteine 174. In terms of domain architecture, Radical SAM core spans 153–400 (RESAYAGWVS…IELQERISLE (248 aa)). Residues 403–482 (QAQVGRTLEL…PHHLIADGAL (80 aa)) form the TRAM domain.

It belongs to the methylthiotransferase family. MiaB subfamily. As to quaternary structure, monomer. [4Fe-4S] cluster serves as cofactor.

The protein resides in the cytoplasm. The enzyme catalyses N(6)-dimethylallyladenosine(37) in tRNA + (sulfur carrier)-SH + AH2 + 2 S-adenosyl-L-methionine = 2-methylsulfanyl-N(6)-dimethylallyladenosine(37) in tRNA + (sulfur carrier)-H + 5'-deoxyadenosine + L-methionine + A + S-adenosyl-L-homocysteine + 2 H(+). In terms of biological role, catalyzes the methylthiolation of N6-(dimethylallyl)adenosine (i(6)A), leading to the formation of 2-methylthio-N6-(dimethylallyl)adenosine (ms(2)i(6)A) at position 37 in tRNAs that read codons beginning with uridine. In Mycobacterium sp. (strain MCS), this protein is tRNA-2-methylthio-N(6)-dimethylallyladenosine synthase.